Consider the following 179-residue polypeptide: Signal peptidase complex catalytic subunit SEC11A (179 aa).

The Cytoplasmic segment spans residues Met-1 to Arg-16. A helical; Signal-anchor for type II membrane protein membrane pass occupies residues Gln-17–Trp-36. Over Lys-37 to Glu-179 the chain is Lumenal. Active-site charge relay system residues include Ser-56, His-96, and Asp-122. The segment at Ala-165–Val-176 is C-terminal short (CTS) helix.

It belongs to the peptidase S26B family. In terms of assembly, component of the signal peptidase complex paralog A (SPC-A) composed of a catalytic subunit SEC11A and three accessory subunits SPCS1, SPCS2 and SPCS3. Within the complex, interacts with SPCS2 and SPCS3. The complex induces a local thinning of the ER membrane which is used to measure the length of the signal peptide (SP) h-region of protein substrates. This ensures the selectivity of the complex towards h-regions shorter than 18-20 amino acids.

Its subcellular location is the endoplasmic reticulum membrane. The enzyme catalyses Cleavage of hydrophobic, N-terminal signal or leader sequences from secreted and periplasmic proteins.. Functionally, catalytic component of the signal peptidase complex (SPC) which catalyzes the cleavage of N-terminal signal sequences from nascent proteins as they are translocated into the lumen of the endoplasmic reticulum. Specifically cleaves N-terminal signal peptides that contain a hydrophobic alpha-helix (h-region) shorter than 18-20 amino acids. The chain is Signal peptidase complex catalytic subunit SEC11A (Sec11a) from Rattus norvegicus (Rat).